Here is a 615-residue protein sequence, read N- to C-terminus: Extracellular metalloproteinase 1 (615 aa).

The first 8 residues, 1–8 (SLPLHVLA), serve as a signal peptide directing secretion. The propeptide occupies 9–235 (HPQPSTSTSL…VHNVVDYVAH (227 aa)). Asn276 carries N-linked (GlcNAc...) asparagine glycosylation. Position 419 (His419) interacts with Zn(2+). Glu420 is a catalytic residue. A Zn(2+)-binding site is contributed by His423. N-linked (GlcNAc...) asparagine glycans are attached at residues Asn464, Asn583, and Asn612.

Belongs to the peptidase M36 family. Zn(2+) is required as a cofactor.

It is found in the secreted. Its function is as follows. Secreted metalloproteinase probably acting as a virulence factor. This chain is Extracellular metalloproteinase 1 (MEP1), found in Trichophyton equinum (Horse ringworm fungus).